A 239-amino-acid chain; its full sequence is Sugar fermentation stimulation protein homolog (239 aa).

It belongs to the SfsA family.

The polypeptide is Sugar fermentation stimulation protein homolog (Agrobacterium fabrum (strain C58 / ATCC 33970) (Agrobacterium tumefaciens (strain C58))).